The chain runs to 258 residues: Phosphate import ATP-binding protein PstB 1 (258 aa).

The ABC transporter domain maps to 5-247 (LDLTDVNIYY…EKIFSNPNQK (243 aa)). Position 37–44 (37–44 (GPSGCGKT)) interacts with ATP.

Belongs to the ABC transporter superfamily. Phosphate importer (TC 3.A.1.7) family. In terms of assembly, the complex is composed of two ATP-binding proteins (PstB), two transmembrane proteins (PstC and PstA) and a solute-binding protein (PstS).

It is found in the cell membrane. It catalyses the reaction phosphate(out) + ATP + H2O = ADP + 2 phosphate(in) + H(+). Part of the ABC transporter complex PstSACB involved in phosphate import. Responsible for energy coupling to the transport system. The polypeptide is Phosphate import ATP-binding protein PstB 1 (Mycobacterium bovis (strain ATCC BAA-935 / AF2122/97)).